A 192-amino-acid polypeptide reads, in one-letter code: Fe/S biogenesis protein NfuA (192 aa).

[4Fe-4S] cluster-binding residues include Cys149 and Cys152.

Belongs to the NfuA family. In terms of assembly, homodimer. The cofactor is [4Fe-4S] cluster.

Its function is as follows. Involved in iron-sulfur cluster biogenesis. Binds a 4Fe-4S cluster, can transfer this cluster to apoproteins, and thereby intervenes in the maturation of Fe/S proteins. Could also act as a scaffold/chaperone for damaged Fe/S proteins. This chain is Fe/S biogenesis protein NfuA, found in Alteromonas mediterranea (strain DSM 17117 / CIP 110805 / LMG 28347 / Deep ecotype).